A 179-amino-acid chain; its full sequence is ATP synthase subunit delta (179 aa).

Belongs to the ATPase delta chain family. In terms of assembly, F-type ATPases have 2 components, F(1) - the catalytic core - and F(0) - the membrane proton channel. F(1) has five subunits: alpha(3), beta(3), gamma(1), delta(1), epsilon(1). F(0) has three main subunits: a(1), b(2) and c(10-14). The alpha and beta chains form an alternating ring which encloses part of the gamma chain. F(1) is attached to F(0) by a central stalk formed by the gamma and epsilon chains, while a peripheral stalk is formed by the delta and b chains.

It is found in the cell inner membrane. Functionally, f(1)F(0) ATP synthase produces ATP from ADP in the presence of a proton or sodium gradient. F-type ATPases consist of two structural domains, F(1) containing the extramembraneous catalytic core and F(0) containing the membrane proton channel, linked together by a central stalk and a peripheral stalk. During catalysis, ATP synthesis in the catalytic domain of F(1) is coupled via a rotary mechanism of the central stalk subunits to proton translocation. In terms of biological role, this protein is part of the stalk that links CF(0) to CF(1). It either transmits conformational changes from CF(0) to CF(1) or is implicated in proton conduction. The polypeptide is ATP synthase subunit delta (Burkholderia vietnamiensis (strain G4 / LMG 22486) (Burkholderia cepacia (strain R1808))).